The chain runs to 414 residues: MKAQTALSFFLILITSLSGSQGIFPLAFFIYVPMNEQIVIGRLDEDIILPSSFERGSEVVIHWKYQDSYKVHSYYKGSDHLESQDPRYANRTSLFYNEIQNGNASLFFRRVSLLDEGIYTCYVGTAIQVITNKVVLKVGVFLTPVMKYEKRNTNSFLICSVLSVYPRPIITWKMDNTPISENNMEETGSLDSFSINSPLNITGSNSSYECTIENSLLKQTWTGRWTMKDGLHKMQSEHVSLSCQPVNDYFSPNQDFKVTWSRMKSGTFSVLAYYLSSSQNTIINESRFSWNKELINQSDFSMNLMDLNLSDSGEYLCNISSDEYTLLTIHTVHVEPSQETASHNKGLWILVPSAILAAFLLIWSVKCCRAQLEARRSRHPADGAQQERCCVPPGERCPSAPDNGEENVPLSGKV.

Positions 1–22 are cleaved as a signal peptide; that stretch reads MKAQTALSFFLILITSLSGSQG. The region spanning 61–131 is the Ig-like V-type 1 domain; that stretch reads IHWKYQDSYK…YVGTAIQVIT (71 aa). N-linked (GlcNAc...) asparagine glycans are attached at residues Asn90 and Asn103. One can recognise an Ig-like C1-type domain in the interval 138 to 222; sequence VGVFLTPVMK…ENSLLKQTWT (85 aa). Disulfide bonds link Cys159/Cys210 and Cys243/Cys317. An Ig-like V-type 2 domain is found at 235–328; that stretch reads QSEHVSLSCQ…ISSDEYTLLT (94 aa). N-linked (GlcNAc...) asparagine glycosylation is present at Asn318. Residues 345–365 traverse the membrane as a helical segment; the sequence is KGLWILVPSAILAAFLLIWSV. The tract at residues 383-414 is disordered; that stretch reads GAQQERCCVPPGERCPSAPDNGEENVPLSGKV.

Interacts with TMIGD2. Expressed at high levels in colon, kidney, testis, lung and pancreas, and at lower levels in small intestine, liver and skeletal muscle. In immune cells, highly expressed in B-cells, dendritic cells and macrophages. Not detected in T-cells.

It is found in the membrane. Through interaction with TMIGD2, costimulates T-cells in the context of TCR-mediated activation. Enhances T-cell proliferation and cytokine production via an AKT-dependent signaling cascade. This is HERV-H LTR-associating protein 2 (HHLA2) from Homo sapiens (Human).